Consider the following 524-residue polypeptide: D-3-phosphoglycerate dehydrogenase (524 aa).

NAD(+)-binding positions include 149–150 (RI), Asp169, 229–231 (CAR), and Asp255. Arg231 is an active-site residue. Glu260 is a catalytic residue. The active-site Proton donor is His278. Position 278–281 (278–281 (HQGA)) interacts with NAD(+). An ACT domain is found at 452 to 524 (LAIIKHIDRP…NIKDVAVINL (73 aa)).

The protein belongs to the D-isomer specific 2-hydroxyacid dehydrogenase family.

The catalysed reaction is (2R)-3-phosphoglycerate + NAD(+) = 3-phosphooxypyruvate + NADH + H(+). It participates in amino-acid biosynthesis; L-serine biosynthesis; L-serine from 3-phospho-D-glycerate: step 1/3. The sequence is that of D-3-phosphoglycerate dehydrogenase (serA) from Methanocaldococcus jannaschii (strain ATCC 43067 / DSM 2661 / JAL-1 / JCM 10045 / NBRC 100440) (Methanococcus jannaschii).